A 330-amino-acid chain; its full sequence is Transcriptional regulatory protein PHO23 (330 aa).

Residues 139-272 (EKIESKSNSK…NSNNSRISRP (134 aa)) are disordered. Residues 231–254 (TAVSPSTISTATAVNNGRIGTSTA) are compositionally biased toward polar residues. Positions 255–269 (SRGVSSVGNSNNSRI) are enriched in low complexity. The PHD-type zinc-finger motif lies at 280-329 (PLYCYCNQVAYGEMVGCDGADCELEWFHLPCIGLETLPKGKWYCDDCKKK). 8 residues coordinate Zn(2+): Cys283, Cys285, Cys296, Cys301, His307, Cys310, Cys323, and Cys326.

Belongs to the ING family. As to quaternary structure, interacts with H3K4me3 and to a lesser extent with H3K4me2. Component of the RPD3C(L) complex composed of at least ASH1, CTI6, DEP1, PHO23, RPD3, RXT2, RXT3, SAP30, SDS3, SIN3, UME1 and UME6.

Its subcellular location is the nucleus. Its function is as follows. Component of the RPD3C(L) histone deacetylase complex (HDAC) responsible for the deacetylation of lysine residues on the N-terminal part of the core histones (H2A, H2B, H3 and H4). Histone deacetylation gives a tag for epigenetic repression and plays an important role in transcriptional regulation, cell cycle progression and developmental events. In Saccharomyces cerevisiae (strain ATCC 204508 / S288c) (Baker's yeast), this protein is Transcriptional regulatory protein PHO23 (PHO23).